The sequence spans 688 residues: PTS system glucoside-specific EIICBA component (688 aa).

The region spanning 3-427 is the PTS EIIC type-1 domain; it reads KKLFGQLQRI…FKLKTPGRED (425 aa). A run of 10 helical transmembrane segments spans residues 12-32, 81-101, 137-157, 182-202, 223-243, 284-304, 315-335, 340-360, 364-384, and 395-415; these read IGKA…LLAF, LGLA…YLIM, LVLG…MGAL, FVPI…SFAW, LTTF…LHHI, AFTT…AFAI, VVGG…ITEP, FLFV…TSFL, LLGV…ILYG, and LVIP…DFAI. A PTS EIIB type-1 domain is found at 438–519; sequence AKLPFDVLDA…AKIMSGEITK (82 aa). Cys-460 functions as the Phosphocysteine intermediate; for EIIB activity in the catalytic mechanism. The PTS EIIA type-1 domain occupies 560–664; that stretch reads DQVFAGKMMG…SIVTPMIITN (105 aa). The Tele-phosphohistidine intermediate; for EIIA activity role is filled by His-612.

The protein resides in the cell membrane. The phosphoenolpyruvate-dependent sugar phosphotransferase system (sugar PTS), a major carbohydrate active -transport system, catalyzes the phosphorylation of incoming sugar substrates concomitantly with their translocation across the cell membrane. This system is involved in alpha- and beta-glucoside transport. This chain is PTS system glucoside-specific EIICBA component (glcB), found in Staphylococcus aureus (strain JH1).